The chain runs to 472 residues: L-fuculokinase (472 aa).

It belongs to the FGGY kinase family. A divalent metal cation is required as a cofactor.

It carries out the reaction L-fuculose + ATP = L-fuculose 1-phosphate + ADP + H(+). It functions in the pathway carbohydrate degradation; L-fucose degradation; L-lactaldehyde and glycerone phosphate from L-fucose: step 2/3. In terms of biological role, catalyzes the phosphorylation of L-fuculose. In Escherichia coli O157:H7, this protein is L-fuculokinase.